The following is a 1098-amino-acid chain: Probable arabinosyltransferase B (1098 aa).

The next 12 membrane-spanning stretches (helical) occupy residues 28 to 50, 217 to 239, 271 to 293, 402 to 419, 434 to 456, 472 to 494, 541 to 558, 570 to 587, 597 to 619, 626 to 648, 663 to 685, and 698 to 720; these read WVATIAGLIGFVLSVATPLLPVV, LKLLAIIGAIVATVVALIALWRL, ASWRTFTLTDAVVIFGFLLWHVI, LRPEGIIALGSLVTYVLI, AVVTAAFTLGVQPTGLIAVAALV, LVGTLPLVSPMLAAGTVILTVVF, FGFLITALCLFTAVFIML, PAWRLMGVIFGTMFFLMF, GLFAAVGAAMAALTTVLVSPSVL, MAFLAALFFLLALCWATTNGWWY, IDGITVSTIFFALFAIAAGYAAW, and LIRALTTAPVPIVAGFMAAVFVA.

It belongs to the emb family.

It localises to the cell membrane. Its function is as follows. Arabinosyl transferase responsible for the polymerization of arabinose into the arabinan of arabinogalactan. The chain is Probable arabinosyltransferase B (embB) from Mycobacterium tuberculosis (strain CDC 1551 / Oshkosh).